A 263-amino-acid chain; its full sequence is MYVGYLLDKDNNMYPNPVRHPGLNLNPQNYVPAPPQYSDFPSYHHVPGINSDPHHGQPGGTWSSYTPSREDWHPYGPGPGASSANPTQIAFSPSDYNPVQPPGSGLLPPSINSSVPPLSPSAQRADPYEWMRRTGVPTTTTTTNGKTRTKDKYRVVYTDHQRLELEKEFHYSRYITIRRKAELAAALGLTERQVKIWFQNRRAKERKVNKKKMQQQSQQASTTTPTPPSVGTTAGMGGLCSSSSSNSNLVSPSSMPIKEEYLS.

The interval 47–108 (PGINSDPHHG…VQPPGSGLLP (62 aa)) is disordered. Positions 82-97 (SSANPTQIAFSPSDYN) are enriched in polar residues. The segment at residues 150 to 209 (KDKYRVVYTDHQRLELEKEFHYSRYITIRRKAELAAALGLTERQVKIWFQNRRAKERKVN) is a DNA-binding region (homeobox). The segment at 153–174 (YRVVYTDHQRLELEKEFHYSRY) is interaction with DNA. The tract at residues 192 to 203 (RQVKIWFQNRRA) is interaction with 5-mCpG DNA. Basic residues predominate over residues 204 to 213 (KERKVNKKKM). The segment at 204–263 (KERKVNKKKMQQQSQQASTTTPTPPSVGTTAGMGGLCSSSSSNSNLVSPSSMPIKEEYLS) is disordered. Low complexity-rich tracts occupy residues 214-233 (QQQSQQASTTTPTPPSVGTT) and 241-254 (SSSSSNSNLVSPSS).

The protein belongs to the Caudal homeobox family.

The protein localises to the nucleus. In terms of biological role, plays a role in transcriptional regulation. Involved in activated KRAS-mediated transcriptional activation of PRKD1. Binds to the PRKD1 promoter. Could play a role in the terminal differentiation of the intestine. Binds preferentially to methylated DNA. This chain is Homeobox protein CDX-1 (cdx1), found in Xenopus laevis (African clawed frog).